We begin with the raw amino-acid sequence, 494 residues long: Sulfate adenylyltransferase subunit 1 (494 aa).

In terms of domain architecture, tr-type G spans 24-240; sequence TRPLRLITCG…LELATVRSAQ (217 aa). The tract at residues 33-40 is G1; sequence GSVDDGKS. 33 to 40 is a GTP binding site; it reads GSVDDGKS. The interval 91-95 is G2; it reads GITID. The tract at residues 112-115 is G3; sequence DTPG. GTP-binding positions include 112-116 and 167-170; these read DTPGH and NKID. Positions 167–170 are G4; it reads NKID. Residues 204 to 206 are G5; that stretch reads SAL.

The protein belongs to the TRAFAC class translation factor GTPase superfamily. Classic translation factor GTPase family. CysN/NodQ subfamily. Heterodimer composed of CysD, the smaller subunit, and CysN.

It catalyses the reaction sulfate + ATP + H(+) = adenosine 5'-phosphosulfate + diphosphate. Its pathway is sulfur metabolism; hydrogen sulfide biosynthesis; sulfite from sulfate: step 1/3. Functionally, with CysD forms the ATP sulfurylase (ATPS) that catalyzes the adenylation of sulfate producing adenosine 5'-phosphosulfate (APS) and diphosphate, the first enzymatic step in sulfur assimilation pathway. APS synthesis involves the formation of a high-energy phosphoric-sulfuric acid anhydride bond driven by GTP hydrolysis by CysN coupled to ATP hydrolysis by CysD. This chain is Sulfate adenylyltransferase subunit 1, found in Rhizobium rhizogenes (strain K84 / ATCC BAA-868) (Agrobacterium radiobacter).